The following is a 359-amino-acid chain: Type-1 angiotensin II receptor (359 aa).

Over 1 to 25 (MILNSSTEDGIKRIQDDCPKAGRHN) the chain is Extracellular. N-linked (GlcNAc...) asparagine glycosylation is present at asparagine 4. Angiotensin II-binding residues include glutamine 15 and aspartate 17. Intrachain disulfides connect cysteine 18/cysteine 274 and cysteine 101/cysteine 180. Residues 26 to 55 (YIFVMIPTLYSIIFVVGIFGNSLVVIVIYF) traverse the membrane as a helical segment. Residues 56-61 (YMKLKT) are Cytoplasmic-facing. The chain crosses the membrane as a helical span at residues 62–89 (VASVFLLNLALADLCFLLTLPLWAVYTA). The Extracellular portion of the chain corresponds to 90-98 (MEYRWPFGN). The chain crosses the membrane as a helical span at residues 99–125 (YLCKIASASVSFNLYASVFLLTCLSID). The Cytoplasmic portion of the chain corresponds to 126-141 (RYVAIVHPMKSPVRRT). Residues 142–165 (MLMAKVTCIIIWLLAGLASLPTII) traverse the membrane as a helical segment. Residues 166–190 (HRNVFFIENTNITVCAFHYESQNST) lie on the Extracellular side of the membrane. Position 167 (arginine 167) interacts with angiotensin II. Residue asparagine 176 is glycosylated (N-linked (GlcNAc...) asparagine). Angiotensin II-binding residues include phenylalanine 182, histidine 183, and tyrosine 184. The N-linked (GlcNAc...) asparagine glycan is linked to asparagine 188. Residues 191 to 216 (LPIGLGLTKNILGFLFPFLIILTSYT) form a helical membrane-spanning segment. Lysine 199 contributes to the angiotensin II binding site. At 217-239 (LIWKTLKRAYEIQKNKPRNDDIF) the chain is on the cytoplasmic side. A helical transmembrane segment spans residues 240–268 (KIIMAIVLFFFFSWVPHQIFTFLDVLIQL). Topologically, residues 269–278 (GIIHDCKIAD) are extracellular. A helical membrane pass occupies residues 279 to 304 (IVDTAMPITICIAYFNNCLNPLFYGF). Residues 305-359 (LGKKFKKYFLQLLKYIPPKAKSHSSLSTKMSTLSYRPSDHGNASTKKSASCVEVE) lie on the Cytoplasmic side of the membrane. Positions 335-352 (STLSYRPSDHGNASTKKS) are enriched in polar residues. The interval 335 to 359 (STLSYRPSDHGNASTKKSASCVEVE) is disordered. Cysteine 355 carries the S-palmitoyl cysteine lipid modification.

The protein belongs to the G-protein coupled receptor 1 family. Interacts with MAS1. Interacts with ARRB1. Interacts with FLNA (via filamin repeat 21); increases PKA-mediated phosphorylation of FLNA. Post-translationally, C-terminal Ser or Thr residues may be phosphorylated. Adrenal, liver, aorta, kidney, lung, testis and heart.

Its subcellular location is the cell membrane. Its function is as follows. Receptor for angiotensin II, a vasoconstricting peptide, which acts as a key regulator of blood pressure and sodium retention by the kidney. The activated receptor in turn couples to G-alpha proteins G(q) (GNAQ, GNA11, GNA14 or GNA15) and thus activates phospholipase C and increases the cytosolic Ca(2+) concentrations, which in turn triggers cellular responses such as stimulation of protein kinase C. This is Type-1 angiotensin II receptor (AGTR1) from Canis lupus familiaris (Dog).